The chain runs to 270 residues: Putative protein-disulfide oxidoreductase RT0103 (270 aa).

Positions 1–17 (MKNIFIVLIFLFLSSCA) are cleaved as a signal peptide. The Thioredoxin domain maps to 71-264 (SVLTQDLHEQ…ISRAVDRALE (194 aa)). Cys117 and Cys120 are joined by a disulfide.

The protein belongs to the thioredoxin family. DsbA subfamily.

It is found in the periplasm. Functionally, may be required for disulfide bond formation in some proteins. This chain is Putative protein-disulfide oxidoreductase RT0103, found in Rickettsia typhi (strain ATCC VR-144 / Wilmington).